A 959-amino-acid chain; its full sequence is Probable serine/threonine-protein kinase DDB_G0291664 (959 aa).

The interval glutamine 154–threonine 213 is disordered. A compositionally biased stretch (pro residues) spans threonine 162 to proline 176. ANK repeat units follow at residues lysine 294–isoleucine 324 and leucine 333–methionine 362. The Protein kinase domain occupies isoleucine 482–leucine 762. ATP contacts are provided by residues isoleucine 488–valine 496 and lysine 509. Aspartate 610 (proton acceptor) is an active-site residue. Residues asparagine 904–glutamine 959 form a disordered region.

This sequence belongs to the protein kinase superfamily. Ser/Thr protein kinase family.

It carries out the reaction L-seryl-[protein] + ATP = O-phospho-L-seryl-[protein] + ADP + H(+). The enzyme catalyses L-threonyl-[protein] + ATP = O-phospho-L-threonyl-[protein] + ADP + H(+). This is Probable serine/threonine-protein kinase DDB_G0291664 from Dictyostelium discoideum (Social amoeba).